A 470-amino-acid chain; its full sequence is ATP synthase subunit beta (470 aa).

156–163 (GGAGVGKT) provides a ligand contact to ATP.

It belongs to the ATPase alpha/beta chains family. F-type ATPases have 2 components, CF(1) - the catalytic core - and CF(0) - the membrane proton channel. CF(1) has five subunits: alpha(3), beta(3), gamma(1), delta(1), epsilon(1). CF(0) has three main subunits: a(1), b(2) and c(9-12). The alpha and beta chains form an alternating ring which encloses part of the gamma chain. CF(1) is attached to CF(0) by a central stalk formed by the gamma and epsilon chains, while a peripheral stalk is formed by the delta and b chains.

It is found in the cell inner membrane. The enzyme catalyses ATP + H2O + 4 H(+)(in) = ADP + phosphate + 5 H(+)(out). Its function is as follows. Produces ATP from ADP in the presence of a proton gradient across the membrane. The catalytic sites are hosted primarily by the beta subunits. The chain is ATP synthase subunit beta from Nitratidesulfovibrio vulgaris (strain ATCC 29579 / DSM 644 / CCUG 34227 / NCIMB 8303 / VKM B-1760 / Hildenborough) (Desulfovibrio vulgaris).